The sequence spans 754 residues: 5-methyltetrahydropteroyltriglutamate--homocysteine methyltransferase (754 aa).

Residues 17-20 (RELK) and lysine 117 each bind 5-methyltetrahydropteroyltri-L-glutamate. L-homocysteine is bound by residues 431–433 (IGS) and glutamate 484. Residues 431–433 (IGS) and glutamate 484 each bind L-methionine. Residues 515 to 516 (RC) and tryptophan 561 contribute to the 5-methyltetrahydropteroyltri-L-glutamate site. Aspartate 599 is an L-homocysteine binding site. An L-methionine-binding site is contributed by aspartate 599. Position 605 (glutamate 605) interacts with 5-methyltetrahydropteroyltri-L-glutamate. The Zn(2+) site is built by histidine 641, cysteine 643, and glutamate 665. Histidine 694 serves as the catalytic Proton donor. Cysteine 726 contacts Zn(2+).

Belongs to the vitamin-B12 independent methionine synthase family. Requires Zn(2+) as cofactor.

It carries out the reaction 5-methyltetrahydropteroyltri-L-glutamate + L-homocysteine = tetrahydropteroyltri-L-glutamate + L-methionine. Its pathway is amino-acid biosynthesis; L-methionine biosynthesis via de novo pathway; L-methionine from L-homocysteine (MetE route): step 1/1. Its function is as follows. Catalyzes the transfer of a methyl group from 5-methyltetrahydrofolate to homocysteine resulting in methionine formation. This Salmonella arizonae (strain ATCC BAA-731 / CDC346-86 / RSK2980) protein is 5-methyltetrahydropteroyltriglutamate--homocysteine methyltransferase.